Reading from the N-terminus, the 269-residue chain is Achromobactin transport ATP-binding protein CbrD (269 aa).

Residues 4 to 240 form the ABC transporter domain; that stretch reads ITSRELTLGY…ALVKTVFNLD (237 aa). ATP is bound at residue 36 to 43; sequence GSNGCGKS.

It belongs to the ABC transporter superfamily.

It localises to the cell inner membrane. Its function is as follows. Part of the binding-protein-dependent transport system CbrABCD for uptake of the siderophore achromobactin. Probably responsible for energy coupling to the transport system. In Dickeya dadantii (strain 3937) (Erwinia chrysanthemi (strain 3937)), this protein is Achromobactin transport ATP-binding protein CbrD (cbrD).